The sequence spans 361 residues: Peptide chain release factor 1 (361 aa).

Residue Gln237 is modified to N5-methylglutamine. Positions 287–297 are enriched in basic and acidic residues; that stretch reads KQQKEQSDTRK. Positions 287–313 are disordered; the sequence is KQQKEQSDTRKSLVGSGDRSERIRTYN.

Belongs to the prokaryotic/mitochondrial release factor family. Methylated by PrmC. Methylation increases the termination efficiency of RF1.

The protein resides in the cytoplasm. Its function is as follows. Peptide chain release factor 1 directs the termination of translation in response to the peptide chain termination codons UAG and UAA. The polypeptide is Peptide chain release factor 1 (Francisella tularensis subsp. holarctica (strain FTNF002-00 / FTA)).